The sequence spans 230 residues: Cytochrome c oxidase subunit 2 (230 aa).

Topologically, residues 1-29 (NNFFQGYNLLFQHSLFASYMDWFHAFNCS) are mitochondrial intermembrane. A helical membrane pass occupies residues 30–50 (LLLGVLVFVTLLFGYLIFSTF). Over 51-63 (YFKSKKIEYQFGE) the chain is Mitochondrial matrix. Residues 64 to 84 (LLCSIFPTIILLMQMVPSLSL) traverse the membrane as a helical segment. At 85 to 230 (LYYYGLMNLD…FKSWCFGTME (146 aa)) the chain is on the mitochondrial intermembrane side. 6 residues coordinate Cu cation: H163, C198, E200, C202, H206, and M209. E200 serves as a coordination point for Mg(2+).

Belongs to the cytochrome c oxidase subunit 2 family. In terms of assembly, component of the cytochrome c oxidase (complex IV, CIV), a multisubunit enzyme composed of a catalytic core of 3 subunits and several supernumerary subunits. The complex exists as a monomer or a dimer and forms supercomplexes (SCs) in the inner mitochondrial membrane with ubiquinol-cytochrome c oxidoreductase (cytochrome b-c1 complex, complex III, CIII). Requires Cu cation as cofactor.

It is found in the mitochondrion inner membrane. It catalyses the reaction 4 Fe(II)-[cytochrome c] + O2 + 8 H(+)(in) = 4 Fe(III)-[cytochrome c] + 2 H2O + 4 H(+)(out). Functionally, component of the cytochrome c oxidase, the last enzyme in the mitochondrial electron transport chain which drives oxidative phosphorylation. The respiratory chain contains 3 multisubunit complexes succinate dehydrogenase (complex II, CII), ubiquinol-cytochrome c oxidoreductase (cytochrome b-c1 complex, complex III, CIII) and cytochrome c oxidase (complex IV, CIV), that cooperate to transfer electrons derived from NADH and succinate to molecular oxygen, creating an electrochemical gradient over the inner membrane that drives transmembrane transport and the ATP synthase. Cytochrome c oxidase is the component of the respiratory chain that catalyzes the reduction of oxygen to water. Electrons originating from reduced cytochrome c in the intermembrane space (IMS) are transferred via the dinuclear copper A center (CU(A)) of subunit 2 and heme A of subunit 1 to the active site in subunit 1, a binuclear center (BNC) formed by heme A3 and copper B (CU(B)). The BNC reduces molecular oxygen to 2 water molecules using 4 electrons from cytochrome c in the IMS and 4 protons from the mitochondrial matrix. In Caenorhabditis remanei (Caenorhabditis vulgaris), this protein is Cytochrome c oxidase subunit 2 (cox-2).